Consider the following 248-residue polypeptide: UDP-2,3-diacylglucosamine hydrolase (248 aa).

5 residues coordinate Mn(2+): Asp-7, His-9, Asp-40, Asn-78, and His-113. Residue 78–79 coordinates substrate; sequence NR. Substrate is bound by residues Asp-121, Ser-159, Thr-163, Lys-166, and His-194. Positions 194 and 196 each coordinate Mn(2+).

The protein belongs to the LpxH family. Mn(2+) serves as cofactor.

Its subcellular location is the cell inner membrane. It catalyses the reaction UDP-2-N,3-O-bis[(3R)-3-hydroxytetradecanoyl]-alpha-D-glucosamine + H2O = 2-N,3-O-bis[(3R)-3-hydroxytetradecanoyl]-alpha-D-glucosaminyl 1-phosphate + UMP + 2 H(+). Its pathway is glycolipid biosynthesis; lipid IV(A) biosynthesis; lipid IV(A) from (3R)-3-hydroxytetradecanoyl-[acyl-carrier-protein] and UDP-N-acetyl-alpha-D-glucosamine: step 4/6. Functionally, hydrolyzes the pyrophosphate bond of UDP-2,3-diacylglucosamine to yield 2,3-diacylglucosamine 1-phosphate (lipid X) and UMP by catalyzing the attack of water at the alpha-P atom. Involved in the biosynthesis of lipid A, a phosphorylated glycolipid that anchors the lipopolysaccharide to the outer membrane of the cell. This chain is UDP-2,3-diacylglucosamine hydrolase, found in Pseudomonas syringae pv. tomato (strain ATCC BAA-871 / DC3000).